The chain runs to 913 residues: Clumping factor B (913 aa).

The signal sequence occupies residues 1-44; sequence MKKRIDYLSNKQNKYSIRRFTVGTTSVIVGATILFGIGNHQAQA. The YSIRK-G/S signaling motif signature appears at 15–26; the sequence is YSIRRFTVGTTS. 2 stretches are compositionally biased toward polar residues: residues 44–61 and 68–95; these read ASEQSNDTTQSSKNNASA and MIETPQLNTTANDTSDISANTNSANVDS. The disordered stretch occupies residues 44–192; sequence ASEQSNDTTQ…QGTSKPSVRT (149 aa). The interval 45–542 is ligand binding A region; the sequence is SEQSNDTTQS…GSADGDSAVN (498 aa). Over residues 96 to 119 the composition is skewed to low complexity; sequence TTKPMSTQTSNTTTTEPASTNETP. Residues 120–189 show a composition bias toward polar residues; sequence QPTAIKNQAT…SNAQGTSKPS (70 aa). Positions 272-276 match the MIDAS-like motif motif; that stretch reads DYSNS. Residues 530–885 form a disordered region; that stretch reads YGGGSADGDS…ETGDKSENTN (356 aa). A compositionally biased stretch (pro residues) spans 545–555; that stretch reads DPTPGPPVDPE. Acidic residues predominate over residues 556–837; the sequence is PSPDPEPEPT…SDSDSDSDSD (282 aa). Residues 841–852 are compositionally biased toward polar residues; sequence RVTPPNNEQKAP. Over residues 869-882 the composition is skewed to basic and acidic residues; that stretch reads HKTDALPETGDKSE. Positions 874-878 match the LPXTG sorting signal motif; sequence LPETG. A Pentaglycyl murein peptidoglycan amidated threonine modification is found at threonine 877. Positions 878 to 913 are cleaved as a propeptide — removed by sortase; it reads GDKSENTNATLFGAMMALLGSLLLFRKRKQDHKEKA.

Belongs to the serine-aspartate repeat-containing protein (SDr) family. Post-translationally, proteolytically cleaved by aureolysin (aur). This cleavage leads to the inactivation of ClfB.

It localises to the secreted. It is found in the cell wall. Functionally, cell surface-associated protein implicated in virulence by promoting bacterial attachment to both alpha- and beta-chains of human fibrinogen and inducing the formation of bacterial clumps. This is Clumping factor B (clfB) from Staphylococcus aureus (strain COL).